A 272-amino-acid polypeptide reads, in one-letter code: Acyl-[acyl-carrier-protein]--UDP-N-acetylglucosamine O-acyltransferase (272 aa).

This sequence belongs to the transferase hexapeptide repeat family. LpxA subfamily. As to quaternary structure, homotrimer.

The protein resides in the cytoplasm. The catalysed reaction is a (3R)-hydroxyacyl-[ACP] + UDP-N-acetyl-alpha-D-glucosamine = a UDP-3-O-[(3R)-3-hydroxyacyl]-N-acetyl-alpha-D-glucosamine + holo-[ACP]. It participates in glycolipid biosynthesis; lipid IV(A) biosynthesis; lipid IV(A) from (3R)-3-hydroxytetradecanoyl-[acyl-carrier-protein] and UDP-N-acetyl-alpha-D-glucosamine: step 1/6. Involved in the biosynthesis of lipid A, a phosphorylated glycolipid that anchors the lipopolysaccharide to the outer membrane of the cell. This is Acyl-[acyl-carrier-protein]--UDP-N-acetylglucosamine O-acyltransferase from Rhizobium etli (strain ATCC 51251 / DSM 11541 / JCM 21823 / NBRC 15573 / CFN 42).